The chain runs to 98 residues: PE family immunomodulator PE35 (98 aa).

Positions M1–D90 constitute a PE domain.

The protein belongs to the mycobacterial PE family. As to quaternary structure, interacts with PPE68. PE35/PPE68 complex interacts with human TLR2.

The protein resides in the secreted. Its subcellular location is the cell surface. Plays a major role in RD1-associated pathogenesis, and may contribute to the establishment and maintenance of M.tuberculosis infection. Together with PPE68, stimulates the secretion of IL-10 and MCP-1 from human macrophages, via the interaction with human Toll-like receptor 2 (TLR2). The polypeptide is PE family immunomodulator PE35 (PE35) (Mycobacterium tuberculosis (strain CDC 1551 / Oshkosh)).